A 381-amino-acid chain; its full sequence is MSLNMFWFLPTHGDGHYLGTEEGSRPVDHGYLQQIAQAADRLGYTGVLIPTGRSCEDAWLVAASMIPVTQRLKFLVALRPSVTSPTVAARQAATLDRLSNGRALFNLVTGSDPQELAGDGVFLDHSERYEASAEFTQVWRRLLLGETVDFNGKHIHVRGAKLLFPPIQQPYPPLYFGGSSDVAQELAAEQVDLYLTWGEPPELVKEKIEQVRAKAAAHGRKIRFGIRLHVIVRETNDEAWQAAERLISHLDDETIAKAQAAFARTDSVGQQRMAALHNGKRDNLEISPNLWAGVGLVRGGAGTALVGDGPTVAARINEYAALGIDSFVLSGYPHLEEAYRVGELLFPHLDVAIPEIPQPQPLNPQGEAVENDFIPRRVAQS.

The protein belongs to the SsuD family. Homotetramer.

It carries out the reaction an alkanesulfonate + FMNH2 + O2 = an aldehyde + FMN + sulfite + H2O + 2 H(+). Catalyzes the desulfonation of aliphatic sulfonates. The chain is Alkanesulfonate monooxygenase from Escherichia coli O157:H7.